A 380-amino-acid polypeptide reads, in one-letter code: Cytochrome b (380 aa).

A run of 4 helical transmembrane segments spans residues 34–54 (FGSL…LLAM), 78–99 (WLIR…YMHI), 114–134 (WNTG…GYVL), and 179–199 (FFAL…IHLT). Heme b contacts are provided by His84 and His98. His183 and His197 together coordinate heme b. Position 202 (His202) interacts with a ubiquinone. A run of 4 helical transmembrane segments spans residues 227-247 (LKDI…ALFS), 289-309 (LGGV…PFLH), 321-341 (LSQS…WIGS), and 348-368 (FIII…ILFP).

This sequence belongs to the cytochrome b family. In terms of assembly, the cytochrome bc1 complex contains 11 subunits: 3 respiratory subunits (MT-CYB, CYC1 and UQCRFS1), 2 core proteins (UQCRC1 and UQCRC2) and 6 low-molecular weight proteins (UQCRH/QCR6, UQCRB/QCR7, UQCRQ/QCR8, UQCR10/QCR9, UQCR11/QCR10 and a cleavage product of UQCRFS1). This cytochrome bc1 complex then forms a dimer. It depends on heme b as a cofactor.

The protein resides in the mitochondrion inner membrane. Component of the ubiquinol-cytochrome c reductase complex (complex III or cytochrome b-c1 complex) that is part of the mitochondrial respiratory chain. The b-c1 complex mediates electron transfer from ubiquinol to cytochrome c. Contributes to the generation of a proton gradient across the mitochondrial membrane that is then used for ATP synthesis. This Oceanodroma tristrami (Tristram's storm-petrel) protein is Cytochrome b (MT-CYB).